We begin with the raw amino-acid sequence, 389 residues long: Probable DNA double-strand break repair nuclease NurA (389 aa).

2 residues coordinate Mn(2+): D74 and D151.

This sequence belongs to the NurA family. Mn(2+) is required as a cofactor.

Functionally, involved in DNA double-strand break (DSB) repair. Probably acts with HerA to stimulate resection of the 5' strand and produce the long 3' single-strand that is required for RadA loading. The chain is Probable DNA double-strand break repair nuclease NurA from Methanocaldococcus jannaschii (strain ATCC 43067 / DSM 2661 / JAL-1 / JCM 10045 / NBRC 100440) (Methanococcus jannaschii).